The primary structure comprises 322 residues: Cell division control protein 10 (322 aa).

An N-acetylmethionine modification is found at Met1. A Septin-type G domain is found at 29 to 302; it reads KGFQFNIMVV…EGFRARQLIA (274 aa). The G1 motif stretch occupies residues 39 to 46; that stretch reads GQSGLGKS. GTP contacts are provided by residues 39 to 46, Thr74, Gly100, and 180 to 188; these read GQSGLGKS and KSDTLTLDE. The segment at 97 to 100 is G3 motif; it reads DTPG. Residues 179–182 are G4 motif; it reads GKSD. Residue Thr216 is modified to Phosphothreonine. 2 residues coordinate GTP: Gly236 and Arg251.

This sequence belongs to the TRAFAC class TrmE-Era-EngA-EngB-Septin-like GTPase superfamily. Septin GTPase family. As to quaternary structure, component of the septin complex which consists of CDC3, CDC10, CDC11, CDC12 and probably SHS1 and rearranges to a cortical collar of highly ordered filaments at the mother-bud-neck. A complex formed by CDC3, CDC10, CDC11 and CDC12 is capable of forming long filaments in vitro and the components seem to be present in a 2:2:2:2 arrangement in vivo. The filaments are proposed to be formed by the end-to-end polymerization of CDC3-CDC12-CDC11 complexes with CDC10 serving as a bridge to bundle the polymers into paired filaments. Component of the GIN4 complex composed of at least BNI5, CDC3, CDC10, CDC11, CDC12, GIN4, NAP1 and SHS1. Self-associates. Interacts with SYP1.

The protein localises to the membrane. It is found in the bud neck. Functionally, septins are GTPases involved in cytokinesis that assemble early in the cell cycle as a patch at the incipient bud site and form a ring approximate 15 minutes before bud emergence, which transforms into an hour-glass shaped collar of cortical filaments that spans both sides of the mother-bud neck. This collar persists until just before cytokinesis, when it splits into two rings that occupy opposite sides of the neck. The septins at the bud neck serve as a structural scaffold that recruits different components involved in diverse processes at specific stages during the cell cycle. Many proteins bind asymmetrically to the septin collar. The septin assembly is regulated by protein kinases GIN4 and/or CLA4. May act by recruiting MYO1 and HOF1, a protein involved in septation, to the site of cleavage. Septins are also involved in cell morphogenesis, bud site selection, chitin deposition, cell cycle regulation, cell compartmentalization and spore wall formation. The sequence is that of Cell division control protein 10 (CDC10) from Saccharomyces cerevisiae (strain ATCC 204508 / S288c) (Baker's yeast).